A 210-amino-acid chain; its full sequence is MPHFKFYYFDVRGRGEAIRLLFHLADEKFDDERFGMEQWGVLKSEMPLGQVPVLEIDGVKISQTTAIARYLGHQFHRAGTNAVDCARLDMIAEVIQEFMSSSGMGKFSRVLLGMIQANKEQFFKENVLPDVEKYAPIVEKFLLENGNNGLLLGDRETWVDVFAAESFSKLIDYGSPDALDAYPHILALINRVFNHPNIKKYVSQRKATPA.

The 78-residue stretch at 2–79 folds into the GST N-terminal domain; the sequence is PHFKFYYFDV…YLGHQFHRAG (78 aa). Residues tyrosine 8, tryptophan 39, lysine 43, 49 to 51, and 63 to 64 each bind glutathione; these read GQV and QT. Positions 81 to 210 constitute a GST C-terminal domain; the sequence is NAVDCARLDM…YVSQRKATPA (130 aa).

It belongs to the GST superfamily. Sigma family.

It catalyses the reaction RX + glutathione = an S-substituted glutathione + a halide anion + H(+). Conjugation of reduced glutathione to a wide number of exogenous and endogenous hydrophobic electrophiles. This chain is Probable glutathione S-transferase gst-36 (gst-36), found in Caenorhabditis elegans.